The chain runs to 532 residues: Probable cyclic di-GMP phosphodiesterase PdeD (532 aa).

2 helical membrane passes run Met-16–Ile-36 and Leu-245–Tyr-265. In terms of domain architecture, EAL spans Arg-266 to Gln-515.

Its subcellular location is the cell membrane. The catalysed reaction is 3',3'-c-di-GMP + H2O = 5'-phosphoguanylyl(3'-&gt;5')guanosine + H(+). Phosphodiesterase (PDE) that catalyzes the hydrolysis of cyclic-di-GMP (c-di-GMP) to 5'-pGpG. May serve as a negative regulator of cellulose synthesis (as has been suggested for S.typhimurium); overexpression inhibits cell aggregation in strains able to produce adhesive curli fimbriae. Cyclic-di-GMP is a second messenger which controls cell surface-associated traits in bacteria. The polypeptide is Probable cyclic di-GMP phosphodiesterase PdeD (Escherichia coli (strain K12)).